The primary structure comprises 147 residues: UPF0306 protein KPN78578_35330 (147 aa).

It belongs to the UPF0306 family.

The sequence is that of UPF0306 protein KPN78578_35330 from Klebsiella pneumoniae subsp. pneumoniae (strain ATCC 700721 / MGH 78578).